A 361-amino-acid chain; its full sequence is Peptide chain release factor 1 (361 aa).

Q235 carries the N5-methylglutamine modification. The disordered stretch occupies residues 288–307 (AAEAQTRKLQVGSGDRSQRI).

Belongs to the prokaryotic/mitochondrial release factor family. Methylated by PrmC. Methylation increases the termination efficiency of RF1.

Its subcellular location is the cytoplasm. Its function is as follows. Peptide chain release factor 1 directs the termination of translation in response to the peptide chain termination codons UAG and UAA. The protein is Peptide chain release factor 1 of Xanthomonas axonopodis pv. citri (strain 306).